A 177-amino-acid polypeptide reads, in one-letter code: MNYIITPVNQNLITAILKDPITGEWNIPILTFNANYDNPFYDDLNVLNNDHKYRQKIIDYFYTCLTEKWLYKDPVFEQLLPYFKISKTKFEGKVCLITNNKKPDMDSNIIYKKFIFKYIETFFVTRIFVEKILKSYVKHTNTKWYDLLNNKTILKGLFAYKIKKIIIGIIENIRNKK.

This is an uncharacterized protein from Acanthamoeba polyphaga (Amoeba).